The following is a 190-amino-acid chain: MDNSTDFNSLRGLSVFLLGMMGSGKSTLGELLSRRLQYRFFDTDILIERVAGKKIREIFVDEGEATFRELETQVLAELSSLTKTVIATGGGMVLKPMNWSYLRHGLMIWLDVPLEILVKRLKQDTSRPLLQSTDLDSKLELLLEQRRGLYAEADLRIVVSDLDTPTDIVEKILTAIPTVIKDFHPERDHN.

Residue 22–27 (GSGKST) participates in ATP binding. Residue Ser-26 coordinates Mg(2+). Positions 44, 68, and 90 each coordinate substrate. Residue Arg-127 coordinates ATP. A substrate-binding site is contributed by Arg-146.

Belongs to the shikimate kinase family. As to quaternary structure, monomer. Mg(2+) serves as cofactor.

The protein resides in the cytoplasm. The catalysed reaction is shikimate + ATP = 3-phosphoshikimate + ADP + H(+). It functions in the pathway metabolic intermediate biosynthesis; chorismate biosynthesis; chorismate from D-erythrose 4-phosphate and phosphoenolpyruvate: step 5/7. Its function is as follows. Catalyzes the specific phosphorylation of the 3-hydroxyl group of shikimic acid using ATP as a cosubstrate. The sequence is that of Shikimate kinase from Microcystis aeruginosa (strain NIES-843 / IAM M-2473).